Here is a 1762-residue protein sequence, read N- to C-terminus: Kinase D-interacting substrate of 220 kDa (1762 aa).

Over 1–508 (MSVLISQSVI…WLIVFLTLLL (508 aa)) the chain is Cytoplasmic. 11 ANK repeats span residues 45–74 (AAEQ…NWTA), 78–107 (ASKE…GWTA), 111–140 (ACYK…SVYP), 145–174 (AGRG…TTPL), 178–207 (ARKG…MTAL), 211–240 (VKGG…NTAL), 244–273 (SKEG…DTVL), 277–306 (VRGG…KTAL), 310–339 (VEKG…ETPL), 343–372 (TKMR…DTPL), and 376–405 (IRGR…KAGE). The 514-residue stretch at 440 to 953 (YDLYSSALAD…NIVSVTGRLL (514 aa)) folds into the KAP NTPase domain. Residues 509-529 (CGGLGLVFAFTVDTNLAIAIS) traverse the membrane as a helical segment. Residues 530–533 (LSFL) lie on the Extracellular side of the membrane. Residues 534-554 (ALIYIFFIVIYFGGRREGESW) form a helical membrane-spanning segment. Residues 555–668 (NWAWALSTRL…SFVIFLFIVG (114 aa)) lie on the Cytoplasmic side of the membrane. The chain crosses the membrane as a helical span at residues 669–689 (CIIAGITLLAIFRVDPKHLTV). Residues 690–696 (NAILISI) are Extracellular-facing. The helical transmembrane segment at 697-717 (ASVVGLAFVLNCRTWWQVLDS) threads the bilayer. Residues 718 to 1680 (LLNSQRKRLH…TPSTVTLNNN (963 aa)) are Cytoplasmic-facing. 2 positions are modified to phosphoserine: Ser-882 and Ser-885. The residue at position 914 (Thr-914) is a Phosphothreonine. A Phosphoserine; by PKD modification is found at Ser-918. The segment at 1089-1092 (PRPP) is mediates interaction with CRKL. 7 positions are modified to phosphoserine: Ser-1163, Ser-1288, Ser-1344, Ser-1351, Ser-1353, Ser-1354, and Ser-1357. Disordered stretches follow at residues 1279 to 1305 (DPRF…HTEL), 1336 to 1358 (RHSN…LNSQ), 1390 to 1440 (EGGT…DGRK), and 1452 to 1556 (YSSS…EPIR). Residues 1338–1350 (SNLSWQSQTRRTP) show a composition bias toward polar residues. Residues 1395 to 1422 (SSTISGRSSPHSTYYIGQSSSGGSIHST) are compositionally biased toward low complexity. Over residues 1423 to 1440 (LEQERGKEGELKQEDGRK) the composition is skewed to basic and acidic residues. The segment covering 1452–1462 (YSSSGVSTNEA) has biased composition (polar residues). Residues Ser-1513, Ser-1518, Ser-1547, and Ser-1566 each carry the phosphoserine modification. Over residues 1514–1524 (DEDESGTEESD) the composition is skewed to acidic residues. Basic and acidic residues predominate over residues 1529 to 1553 (LKDDKDKKAEGKAERVCKSPEHSAE). The interval 1571 to 1628 (DKKDSSDSGVRSNESSPNHSLHNEAADDSQLEKANLIELEDEGHSGKRGMPHSLSGLQ) is disordered. The span at 1579 to 1590 (GVRSNESSPNHS) shows a compositional bias: polar residues. Ser-1615 and Ser-1625 each carry phosphoserine. The residue at position 1671 (Thr-1671) is a Phosphothreonine. The residue at position 1673 (Ser-1673) is a Phosphoserine. Residue Thr-1676 is modified to Phosphothreonine. The tract at residues 1704 to 1762 (ILRPGPSPNPTAVQNENLKSMAHKRSQRSSYTRLSKDASELHAASSESTGFGEERESIL) is disordered. The short motif at 1757–1762 (ERESIL) is the PDZ-binding element.

As to quaternary structure, found in a complex, at least composed of KIDINS220, MAGI2, NTRK1 and RAPGEF2; the complex is mainly formed at late endosomes in a nerve growth factor (NGF)-dependent manner. Interacts with RAPGEF2; the interaction is strengthened after NGF stimulation. Isoform 2 interacts (via C-terminal domain) with MAGI2 isoform 1 (via PDZ domain). Interacts with NTRK1, NTRK2, NTRK3, ERKL and NGFR. Can form a ternary complex with NGFR and NTRK1 and this complex is affected by the expression levels of KIDINS220/ARMS. An increase in KIDINS220/ARMS expression leads to a decreased association of NGFR and NTRK1. Interacts (via PDZ-binding motif) with SNTA1 and SNTB2 (via PDZ domains). Interacts with EPHA4 and PRKD1. Tyrosine phosphorylated by NTRK1, NTRK2, EPHB2 and EPHA4. Phosphorylation at Ser-918 is induced by phorbol ester treatment. Phosphorylation by NTRK2 is induced by brain-derived neurotrophic factor (BDNF) and neurotrophin-4/5. Phosphorylation by NTRK1 is induced by nerve growth factor (NGF). Expressed in developing nervous system and in highly plastic areas of the adult brain. Also expressed in neuroendocrine cells, where it concentrates at the tip of neurites. Expressed in developing muscle and is concentrated at the neuromuscular junction (NMS). SNTA1 can regulate its localization in the NMS.

It is found in the membrane. Its subcellular location is the late endosome. Functionally, promotes a prolonged MAP-kinase signaling by neurotrophins through activation of a Rap1-dependent mechanism. Provides a docking site for the CRKL-C3G complex, resulting in Rap1-dependent sustained ERK activation. May play an important role in regulating postsynaptic signal transduction through the syntrophin-mediated localization of receptor tyrosine kinases such as EPHA4. In cooperation with SNTA1 can enhance EPHA4-induced JAK/STAT activation. Plays a role in nerve growth factor (NGF)-induced recruitment of RAPGEF2 to late endosomes and neurite outgrowth. May play a role in neurotrophin- and ephrin-mediated neuronal outgrowth and in axon guidance during neural development and in neuronal regeneration. This chain is Kinase D-interacting substrate of 220 kDa (Kidins220), found in Rattus norvegicus (Rat).